Here is a 119-residue protein sequence, read N- to C-terminus: Membrane-anchored ubiquitin-fold protein 1 (119 aa).

The region spanning 9-75 (FEIKFRLPDG…LENNKTLSEC (67 aa)) is the Ubiquitin-like domain. Cys116 carries the cysteine methyl ester modification. Cys116 carries the S-farnesyl cysteine lipid modification. Residues 117–119 (SIM) constitute a propeptide, removed in mature form.

The protein localises to the cell membrane. May serve as docking site to facilitate the association of other proteins to the plasma membrane. The chain is Membrane-anchored ubiquitin-fold protein 1 (MUB1) from Oryza sativa subsp. japonica (Rice).